The primary structure comprises 170 residues: Glycine cleavage system H protein, mitochondrial (170 aa).

A mitochondrion-targeting transit peptide spans Met1–Tyr47. Positions Thr61 to Lys143 constitute a Lipoyl-binding domain. At Lys102 the chain carries N6-lipoyllysine.

It belongs to the GcvH family. Component of the glycine decarboxylase complex (GDC), which is composed of four proteins: P, T, L and H. It depends on (R)-lipoate as a cofactor.

It localises to the mitochondrion. In terms of biological role, the glycine cleavage system (glycine decarboxylase complex) catalyzes the degradation of glycine. The H protein shuttles the methylamine group of glycine from the P protein to the T protein. This chain is Glycine cleavage system H protein, mitochondrial (GCV3), found in Saccharomyces cerevisiae (strain ATCC 204508 / S288c) (Baker's yeast).